A 1705-amino-acid polypeptide reads, in one-letter code: Alpha-protein kinase 3 (1705 aa).

Low complexity predominate over residues 1-10 (MGSRRAPSRG). A disordered region spans residues 1-33 (MGSRRAPSRGWGAGGRSGAGGDGEDDGPVWIPS). The span at 11-21 (WGAGGRSGAGG) shows a compositional bias: gly residues. One can recognise an Ig-like 1 domain in the interval 77 to 168 (PLFETTLKSR…GIVSCSGVLE (92 aa)). Over residues 211–221 (DTLRKLSPDRF) the composition is skewed to basic and acidic residues. Disordered regions lie at residues 211–244 (DTLR…EPEG), 308–749 (LKEE…GPRA), 792–845 (GPLS…ERPG), 1082–1145 (GLAS…KFPG), and 1173–1226 (RAAG…MLEV). Serine 228 carries the phosphoserine modification. Residues 308-342 (LKEESGAKKKKKDEESKQGLRKPELEKAAQSRRSS) are compositionally biased toward basic and acidic residues. Residues 370 to 382 (PRGRAARGPGSSG) are compositionally biased toward low complexity. The segment covering 495-504 (DSKPISSLSQ) has biased composition (polar residues). The span at 557–579 (TTTAPTMSASSSSDVASIGVSTS) shows a compositional bias: low complexity. Residues 598-609 (TSANQRTGSKKN) show a composition bias toward polar residues. A compositionally biased stretch (basic and acidic residues) spans 647–657 (ESKRPQSDRSA). The span at 666–676 (RAETQLETTQA) shows a compositional bias: polar residues. Basic and acidic residues predominate over residues 679–700 (KIQEDRKAQADKGTQEDRRMQG). Positions 708 to 729 (KGTQSEGSAPTAMEGQSEQEVA) are enriched in polar residues. A compositionally biased stretch (pro residues) spans 736 to 745 (SRTPKLPPTA). The segment covering 829–844 (AKQEDSPFQCPKEERP) has biased composition (basic and acidic residues). Over residues 1120-1131 (GQAAPGQGPSAE) the composition is skewed to low complexity. Serine 1222 carries the post-translational modification Phosphoserine. Positions 1274–1362 (PQVIRKIRVE…GSASTDFCLS (89 aa)) constitute an Ig-like 2 domain. A disulfide bridge connects residues cysteine 1296 and cysteine 1346. In terms of domain architecture, Alpha-type protein kinase spans 1390–1625 (KGLADSGCWG…YCELLGLTPL (236 aa)). The tract at residues 1628–1705 (PEAAHPQAKA…EEGSKAQGMR (78 aa)) is disordered. Residues 1664-1696 (PQGTRKSAPSSKATPQASEPVTTQLLGQPPTQE) are compositionally biased toward polar residues.

This sequence belongs to the protein kinase superfamily. Alpha-type protein kinase family. ALPK subfamily.

It is found in the nucleus. The enzyme catalyses L-seryl-[protein] + ATP = O-phospho-L-seryl-[protein] + ADP + H(+). It carries out the reaction L-threonyl-[protein] + ATP = O-phospho-L-threonyl-[protein] + ADP + H(+). Involved in cardiomyocyte differentiation. The polypeptide is Alpha-protein kinase 3 (Homo sapiens (Human)).